The chain runs to 483 residues: O-acetyltransferase pboB (483 aa).

It belongs to the fumigaclavine B O-acetyltransferase family. As to quaternary structure, monomer.

It functions in the pathway secondary metabolite biosynthesis. Its function is as follows. O-acetyltransferase; part of the gene cluster that mediates the biosynthesis of protubonine B, a hydroxylated and diacetylated cyclo-L-Trp-L-Leu derivative. Within the pathway, pboB catalyzes the acetylation of protubonine C at N-1 of the indoline ring to produce protubonine B. The first step of the protubonine B synthesis is performed by the nonribosomal peptide synthetase pboA that catalyzes the formation of cyclo-L-Trp-L-Leu by condensing L-Leu with L-Trp. The flavin-dependent monooxygenase pboD is responsible for hydroxylation at C-3 of the indole ring and subsequent formation of the pyrrolidine ring, leadind to protubonine D. Protubonine D is further diacetylated by two acetyltransferases, pboB and pboC, to form the final product protubonine B via protubonine C. The polypeptide is O-acetyltransferase pboB (Aspergillus ustus).